We begin with the raw amino-acid sequence, 78 residues long: Cell division topological specificity factor (78 aa).

The protein belongs to the MinE family.

Prevents the cell division inhibition by proteins MinC and MinD at internal division sites while permitting inhibition at polar sites. This ensures cell division at the proper site by restricting the formation of a division septum at the midpoint of the long axis of the cell. In Helicobacter hepaticus (strain ATCC 51449 / 3B1), this protein is Cell division topological specificity factor.